We begin with the raw amino-acid sequence, 644 residues long: Exoribonuclease 2 (644 aa).

Residues 189–516 (RQDLTALNFV…NHRLLKAVIK (328 aa)) form the RNB domain. One can recognise an S1 motif domain in the interval 561-643 (NTRFAAEIID…ETRSIIARPA (83 aa)).

This sequence belongs to the RNR ribonuclease family. RNase II subfamily.

It localises to the cytoplasm. It catalyses the reaction Exonucleolytic cleavage in the 3'- to 5'-direction to yield nucleoside 5'-phosphates.. In terms of biological role, involved in mRNA degradation. Hydrolyzes single-stranded polyribonucleotides processively in the 3' to 5' direction. The protein is Exoribonuclease 2 of Salmonella paratyphi B (strain ATCC BAA-1250 / SPB7).